Here is a 326-residue protein sequence, read N- to C-terminus: G-protein coupled receptor 1 (326 aa).

At serine 2 the chain carries N-acetylserine. Over 2-23 the chain is Extracellular; the sequence is SAVLTAGGGLTAGDRSIITAIN. Residues 24–44 traverse the membrane as a helical segment; sequence TGASSLSFVGSAFIVLCYCLF. Topologically, residues 45–51 are cytoplasmic; sequence KELRKFS. A helical membrane pass occupies residues 52–72; sequence FKLVFYLALSDMLCSFFLIVG. The Extracellular segment spans residues 73–84; it reads DPSKGFICYAQG. A disulfide bridge links cysteine 80 with cysteine 151. Residues 85–105 traverse the membrane as a helical segment; that stretch reads YTTHFFCVASFLWTTTIAFTL. The Cytoplasmic portion of the chain corresponds to 106–120; it reads HRTVVKHKTDVEDLE. A helical transmembrane segment spans residues 121 to 141; the sequence is AMFHLYVWGTSLVVTVIRSFG. At 142–160 the chain is on the extracellular side; it reads NNHSHLGPWCWTQTGLKGK. The N-linked (GlcNAc...) asparagine glycan is linked to asparagine 143. The helical transmembrane segment at 161 to 181 threads the bilayer; that stretch reads AVHFLTFYAPLWGAILYNGFT. Residues 182–213 are Cytoplasmic-facing; that stretch reads YFQVIRMLRNARRMAVGMSDRVDQFDNRAELK. A helical membrane pass occupies residues 214–234; that stretch reads VLNRWGYYPLILIGSWAFGTI. The Extracellular segment spans residues 235-246; that stretch reads NRIHDFIEPGHK. Residues 247–267 form a helical membrane-spanning segment; that stretch reads IFWLSVLDVGTAALMGLFNSI. Over 268-326 the chain is Cytoplasmic; the sequence is AYGFNSSVRRAIHERLELFLPERLYRWLPSNFRPKNHLILHQQQQQRSEMVSLKTEDQQ.

The protein belongs to the G-protein coupled receptor 2 family. Interacts with GPA1. Mostly present in the meristematic regions. Expressed at low levels in seedlings, vascular tissues of cotyledons, hypocotyl, and roots, stems, leaves, flowering buds and siliques. In dark-grown seedlings, localized in the cotyledons and the hook.

The protein localises to the cell membrane. In terms of biological role, together with GPA1, may regulate the cell cycle via a signaling cascade that uses phosphatidylinositol-specific phospholipase C (PI-PLC) as an effector and inositol 1,4,5-trisphosphate(IP(3)) as a second messenger. Promotes PI-PLC activity and IP(3) accumulation. Involved in the blue light (BL) signaling. Together with GPA1 and ADT3, required for BL-mediated synthesis of phenylpyruvate and subsequently of phenylalanine (Phe), in etiolated seedlings. Probably involved in cytokinin signal transduction. Plays a positive role in gibberellin- (GA) and brassinosteroid- (BR) regulated seed germination, probably independently of a heterotrimeric G-protein. Mediates seed dormancy abolition, and promotes seed germination and flowering. In Arabidopsis thaliana (Mouse-ear cress), this protein is G-protein coupled receptor 1 (GCR1).